We begin with the raw amino-acid sequence, 335 residues long: Large ribosomal subunit protein uL10 (335 aa).

Positions 306-335 are disordered; it reads VEETVEEEEEEEEEEDAEEEAAAGLGALFG. Residues 308-326 show a composition bias toward acidic residues; the sequence is ETVEEEEEEEEEEDAEEEA.

The protein belongs to the universal ribosomal protein uL10 family. As to quaternary structure, part of the 50S ribosomal subunit. Forms part of the ribosomal stalk which helps the ribosome interact with GTP-bound translation factors. Forms a heptameric L10(L12)2(L12)2(L12)2 complex, where L10 forms an elongated spine to which the L12 dimers bind in a sequential fashion.

Forms part of the ribosomal stalk, playing a central role in the interaction of the ribosome with GTP-bound translation factors. The protein is Large ribosomal subunit protein uL10 of Methanobrevibacter smithii (strain ATCC 35061 / DSM 861 / OCM 144 / PS).